We begin with the raw amino-acid sequence, 92 residues long: Costars family protein ST45-2 (92 aa).

At methionine 1 the chain carries N-acetylmethionine.

This sequence belongs to the costars family.

This Eutrema halophilum (Salt cress) protein is Costars family protein ST45-2.